Here is a 158-residue protein sequence, read N- to C-terminus: Small ribosomal subunit protein uS17 (158 aa).

Position 2 is an N-acetylalanine (A2). R22 is subject to Citrulline. Residues K38, K45, and K58 each carry the N6-acetyllysine modification. The S-palmitoyl cysteine moiety is linked to residue C60. S67 carries the phosphoserine modification. The residue at position 69 (R69) is an Omega-N-methylarginine. At S110 the chain carries Phosphoserine.

This sequence belongs to the universal ribosomal protein uS17 family. In terms of assembly, component of the small ribosomal subunit. Part of the small subunit (SSU) processome, composed of more than 70 proteins and the RNA chaperone small nucleolar RNA (snoRNA) U3. In terms of processing, citrullinated by PADI4.

It is found in the cytoplasm. The protein resides in the nucleus. The protein localises to the nucleolus. Functionally, component of the small ribosomal subunit. The ribosome is a large ribonucleoprotein complex responsible for the synthesis of proteins in the cell. Part of the small subunit (SSU) processome, first precursor of the small eukaryotic ribosomal subunit. During the assembly of the SSU processome in the nucleolus, many ribosome biogenesis factors, an RNA chaperone and ribosomal proteins associate with the nascent pre-rRNA and work in concert to generate RNA folding, modifications, rearrangements and cleavage as well as targeted degradation of pre-ribosomal RNA by the RNA exosome. The protein is Small ribosomal subunit protein uS17 (RPS11) of Canis lupus familiaris (Dog).